The chain runs to 452 residues: Na(+)/H(+) antiporter NhaA (452 aa).

The next 11 membrane-spanning stretches (helical) occupy residues 27–47 (FSGIFLFFCAVVAMISANSAL), 67–87 (FIGMSLHHWINDVLMSFFFLM), 108–128 (AFPAIAALGGMIVPAIVYTLF), 137–157 (GFGIPMATDIAFALGVLLLLG), 166–186 (VFLVSLAVVDDLGAVVVIAIF), 194–214 (LWLLYSVVILGLLIGLNKMGV), 216–236 (SLFPYAILGVLLWITVHNCGI), 314–334 (PWSAYFIMPVFAFANAGVAIS), 343–363 (GVLPGIMLGLIVGKPVGILGL), 381–401 (WIDILGAGMLAGIGFTMSIFI), and 414–434 (VAKIAILSASLFAGALGYFFI).

Belongs to the NhaA Na(+)/H(+) (TC 2.A.33) antiporter family.

It is found in the cell inner membrane. It catalyses the reaction Na(+)(in) + 2 H(+)(out) = Na(+)(out) + 2 H(+)(in). Na(+)/H(+) antiporter that extrudes sodium in exchange for external protons. The protein is Na(+)/H(+) antiporter NhaA of Wolinella succinogenes (strain ATCC 29543 / DSM 1740 / CCUG 13145 / JCM 31913 / LMG 7466 / NCTC 11488 / FDC 602W) (Vibrio succinogenes).